The sequence spans 858 residues: DNA mismatch repair protein MutS (858 aa).

603 to 610 (GPNMSGKS) provides a ligand contact to ATP.

This sequence belongs to the DNA mismatch repair MutS family.

In terms of biological role, this protein is involved in the repair of mismatches in DNA. It is possible that it carries out the mismatch recognition step. This protein has a weak ATPase activity. The chain is DNA mismatch repair protein MutS from Streptococcus agalactiae serotype Ia (strain ATCC 27591 / A909 / CDC SS700).